The primary structure comprises 438 residues: 23S rRNA (uracil(1939)-C(5))-methyltransferase RlmD (438 aa).

Residues 10–68 (RVTTRQTITVKVHDLDSFGQGVAHHNGKALFVQGALPDEVAEVSIIEDKRHFSRGVATR) form the TRAM domain. Cys-81, Cys-87, Cys-90, and Cys-168 together coordinate [4Fe-4S] cluster. S-adenosyl-L-methionine contacts are provided by Gln-271, Phe-300, Asn-305, Glu-321, Asn-348, and Asp-369. The active-site Nucleophile is Cys-395.

The protein belongs to the class I-like SAM-binding methyltransferase superfamily. RNA M5U methyltransferase family. RlmD subfamily.

It carries out the reaction uridine(1939) in 23S rRNA + S-adenosyl-L-methionine = 5-methyluridine(1939) in 23S rRNA + S-adenosyl-L-homocysteine + H(+). Its function is as follows. Catalyzes the formation of 5-methyl-uridine at position 1939 (m5U1939) in 23S rRNA. In Erwinia tasmaniensis (strain DSM 17950 / CFBP 7177 / CIP 109463 / NCPPB 4357 / Et1/99), this protein is 23S rRNA (uracil(1939)-C(5))-methyltransferase RlmD.